The chain runs to 383 residues: Chaperone protein DnaJ (383 aa).

A J domain is found at 5 to 70 (DYYEVLGVAK…EKRAAYDRFG (66 aa)). A CR-type zinc finger spans residues 139–217 (GKTETIRIPT…CSGAGRVNRE (79 aa)). Zn(2+)-binding residues include cysteine 152, cysteine 155, cysteine 169, cysteine 172, cysteine 191, cysteine 194, cysteine 205, and cysteine 208. CXXCXGXG motif repeat units follow at residues 152 to 159 (CEACSGTG), 169 to 176 (CSTCGGYG), 191 to 198 (CPNCHGRG), and 205 to 212 (CTACSGAG).

This sequence belongs to the DnaJ family. In terms of assembly, homodimer. Zn(2+) serves as cofactor.

The protein resides in the cytoplasm. Its function is as follows. Participates actively in the response to hyperosmotic and heat shock by preventing the aggregation of stress-denatured proteins and by disaggregating proteins, also in an autonomous, DnaK-independent fashion. Unfolded proteins bind initially to DnaJ; upon interaction with the DnaJ-bound protein, DnaK hydrolyzes its bound ATP, resulting in the formation of a stable complex. GrpE releases ADP from DnaK; ATP binding to DnaK triggers the release of the substrate protein, thus completing the reaction cycle. Several rounds of ATP-dependent interactions between DnaJ, DnaK and GrpE are required for fully efficient folding. Also involved, together with DnaK and GrpE, in the DNA replication of plasmids through activation of initiation proteins. This Methylorubrum populi (strain ATCC BAA-705 / NCIMB 13946 / BJ001) (Methylobacterium populi) protein is Chaperone protein DnaJ.